A 90-amino-acid chain; its full sequence is MSSTNETNQVLQRLNSLKIVETPKEQHEFGKRECYSLDSKKYSLVPATPSSSGHGKFQTELKKRRKNKLNRMYTYEADKNFIKARKSLNF.

2 positions are modified to phosphothreonine: Thr22 and Thr48. Residues 46–65 (PATPSSSGHGKFQTELKKRR) form a disordered region.

As to quaternary structure, component of the Frs-CycA-Cdk1 complex composed of Z600, CycA and Cdk1. Interacts preferentially with CycA (via C-terminus) but is also able to interact (via C-terminus) with CycE (via C-terminus).

The protein resides in the nucleus. In terms of biological role, cell cycle regulator that is involved in modulating and adjusting cell proliferation according to the requirements of the developmental program. Interacts with mitotic Cdk1-cyclin complexes to inhibit mitotic entry at the G2/M transition. Likely to function by binding to the hydrophobic patch of cyclins to interfere with the interaction between the complex and certain Cdk1 substrates. At the mid-blastula transition, involved in the cell cycle arrest in G2 of cycle 14 by delaying mitosis and thus reducing cell proliferation allowing cell fate specification and morphogenesis to take place. Acts downstream or in parallel to the checkpoint regulator grp which is also required for the cell cycle pause at cycle 14. During gastrulation, delays mitosis in the ventral region of the embryonic mesoderm thus allowing invagination to be completed before cell division takes place. In Drosophila melanogaster (Fruit fly), this protein is Protein Z600.